The sequence spans 193 residues: Acyl carrier protein phosphodiesterase (193 aa).

This sequence belongs to the AcpH family.

The catalysed reaction is holo-[ACP] + H2O = apo-[ACP] + (R)-4'-phosphopantetheine + H(+). In terms of biological role, converts holo-ACP to apo-ACP by hydrolytic cleavage of the phosphopantetheine prosthetic group from ACP. The chain is Acyl carrier protein phosphodiesterase from Salmonella paratyphi A (strain ATCC 9150 / SARB42).